Here is an 860-residue protein sequence, read N- to C-terminus: Protein argonaute-2 (860 aa).

Positions 1 to 30 (MYSGAGPALAPPAPPPPPIQGYAFKPPPRP) are disordered. Tyrosine 2 carries the post-translational modification 3'-nitrotyrosine. Residues 9 to 30 (LAPPAPPPPPIQGYAFKPPPRP) show a composition bias toward pro residues. Residues 230–349 (PVIEFVCEVL…LPLEVCNIVA (120 aa)) form the PAZ domain. The interval 312–317 (YFKDRH) is interaction with guide RNA. The residue at position 388 (serine 388) is a Phosphoserine. The Piwi domain occupies 518–819 (LVVVILPGKT…VAFRARYHLV (302 aa)). The interval 525 to 567 (GKTPVYAEVKRVGDTVLGMATQCVQMKNVQRTTPQTLSNLWLK) is interaction with guide RNA. Positions 588 to 591 (FQQP) are interaction with GW182 family members. Aspartate 598 lines the a divalent metal cation pocket. Residues 651 to 661 (LIQFYKSTRFK) are interaction with GW182 family members. Aspartate 670 serves as a coordination point for a divalent metal cation. Proline 701 carries the 4-hydroxyproline modification. 3 interaction with guide RNA regions span residues 710–711 (KR), 754–762 (HAGIQGTSR), and 791–813 (YVRC…VAFR). Residue histidine 808 coordinates a divalent metal cation. Phosphoserine is present on residues serine 825, serine 829, serine 832, and serine 835.

This sequence belongs to the argonaute family. Ago subfamily. As to quaternary structure, interacts with DICER1 through its Piwi domain and with TARBP2 during assembly of the RNA-induced silencing complex (RISC). Together, DICER1, AGO2 and TARBP2 constitute the trimeric RISC loading complex (RLC), or micro-RNA (miRNA) loading complex (miRLC). Within the RLC/miRLC, DICER1 and TARBP2 are required to process precursor miRNAs (pre-miRNAs) to mature miRNAs and then load them onto AGO2. AGO2 bound to the mature miRNA constitutes the minimal RISC and may subsequently dissociate from DICER1 and TARBP2. Note however that the term RISC has also been used to describe the trimeric RLC/miRLC. The formation of RISC complexes containing siRNAs rather than miRNAs appears to occur independently of DICER1. Interacts with AGO1. Also interacts with DDB1, DDX5, DDX6, DDX20, DHX30, DHX36, DDX47, DHX9, ELAVL, FXR1, GEMIN4, HNRNPF, IGF2BP1, ILF3, IMP8, MATR3, PABPC1, PRMT5, P4HA1, P4HB, RBM4, SART3, TNRC6A, TNRC6B, UPF1 and YBX1. Interacts with the P-body components DCP1A and XRN1. Associates with polysomes and messenger ribonucleoproteins (mNRPs). Interacts with RBM4; the interaction is modulated under stress-induced conditions, occurs under both cell proliferation and differentiation conditions and in an RNA- and phosphorylation-independent manner. Interacts with LIMD1, WTIP and AJUBA. Interacts with TRIM71; the interaction increases in presence of RNA. Interacts with APOBEC3G in an RNA-dependent manner. Interacts with APOBEC3A, APOBEC3C, APOBEC3F and APOBEC3H. Interacts with DICER1, TARBP2, EIF6, MOV10 and RPL7A (60S ribosome subunit); they form a large RNA-induced silencing complex (RISC). Interacts with FMR1. Interacts with ZFP36. Interacts with RC3H1; the interaction is RNA independent. Found in a complex composed of AGO2, CHD7 and ARB2A. Interacts with SND1 and SYT11. Interacts with CLNK. Interacts with GARRE1. Interacts with GRB2; this interaction is important for the formation of a ternary complex containing GRB2, AGO2 and DICER1. Mg(2+) serves as cofactor. It depends on Mn(2+) as a cofactor. Hydroxylated. 4-hydroxylation appears to enhance protein stability but is not required for miRNA-binding or endonuclease activity. Post-translationally, ubiquitinated on surface-exposed lysines by a SCF-like E3 ubiquitin-protein ligase complex containing ZSWIM8 during target-directed microRNA degradation (TDMD), a process that mediates degradation of microRNAs (miRNAs). Ubiquitination by the SCF-like E3 ubiquitin-protein ligase complex containing ZSWIM8 leads to its subsequent degradation, thereby exposing miRNAs for degradation. ZSWIM8 recognizes and binds AGO2 when it is engaged with a TDMD target. In terms of processing, phosphorylation at Ser-388 by AKT3; leads to up-regulate translational repression of microRNA target and down-regulate endonucleolytic cleavage. A phosphorylation cycle of C-terminal serine cluster (Ser-825-Ser-835) regulates the release of target mRNAs. Target-binding leads to phosphorylation of these residues by CSNK1A1, which reduces the affinity of AGO2 for mRNA and enables target release. The ANKRD52-PPP6C phosphatase complex dephosphorylates the residues, which primes AGO2 for binding a new target.

It is found in the cytoplasm. The protein localises to the P-body. Its subcellular location is the nucleus. The catalysed reaction is Endonucleolytic cleavage to 5'-phosphomonoester.. Required for RNA-mediated gene silencing (RNAi) by the RNA-induced silencing complex (RISC). The 'minimal RISC' appears to include AGO2 bound to a short guide RNA such as a microRNA (miRNA) or short interfering RNA (siRNA). These guide RNAs direct RISC to complementary mRNAs that are targets for RISC-mediated gene silencing. The precise mechanism of gene silencing depends on the degree of complementarity between the miRNA or siRNA and its target. Binding of RISC to a perfectly complementary mRNA generally results in silencing due to endonucleolytic cleavage of the mRNA specifically by AGO2. Binding of RISC to a partially complementary mRNA results in silencing through inhibition of translation, and this is independent of endonuclease activity. May inhibit translation initiation by binding to the 7-methylguanosine cap, thereby preventing the recruitment of the translation initiation factor eIF4-E. May also inhibit translation initiation via interaction with EIF6, which itself binds to the 60S ribosomal subunit and prevents its association with the 40S ribosomal subunit. The inhibition of translational initiation leads to the accumulation of the affected mRNA in cytoplasmic processing bodies (P-bodies), where mRNA degradation may subsequently occur. In some cases RISC-mediated translational repression is also observed for miRNAs that perfectly match the 3' untranslated region (3'-UTR). Can also up-regulate the translation of specific mRNAs under certain growth conditions. Binds to the AU element of the 3'-UTR of the TNF (TNF-alpha) mRNA and up-regulates translation under conditions of serum starvation. Also required for transcriptional gene silencing (TGS), in which short RNAs known as antigene RNAs or agRNAs direct the transcriptional repression of complementary promoter regions. The sequence is that of Protein argonaute-2 (AGO2) from Bos taurus (Bovine).